A 142-amino-acid polypeptide reads, in one-letter code: Hemoglobin subunit alpha (142 aa).

The region spanning 2 to 142 (VLSGEDKSNI…VSTVLTSKYR (141 aa)) is the Globin domain. Residue S4 is modified to Phosphoserine. N6-succinyllysine is present on residues K8 and K12. Position 17 is an N6-acetyllysine; alternate (K17). N6-succinyllysine; alternate is present on K17. Position 25 is a phosphotyrosine (Y25). A Phosphoserine modification is found at S36. The residue at position 41 (K41) is an N6-succinyllysine. S50 carries the post-translational modification Phosphoserine. H59 contributes to the O2 binding site. H88 provides a ligand contact to heme b. S103 is modified (phosphoserine). Residue T109 is modified to Phosphothreonine. S112, S125, and S132 each carry phosphoserine. 2 positions are modified to phosphothreonine: T135 and T138. S139 is modified (phosphoserine).

The protein belongs to the globin family. As to quaternary structure, heterotetramer of two alpha chains and two beta chains. In terms of tissue distribution, red blood cells.

Involved in oxygen transport from the lung to the various peripheral tissues. Its function is as follows. Hemopressin acts as an antagonist peptide of the cannabinoid receptor CNR1. Hemopressin-binding efficiently blocks cannabinoid receptor CNR1 and subsequent signaling. This chain is Hemoglobin subunit alpha (Hba), found in Mus musculus (Mouse).